A 187-amino-acid chain; its full sequence is Putative protein YbeM (187 aa).

In terms of domain architecture, CN hydrolase spans 1–163; sequence MMTTILTIHV…PALIMAEVTP (163 aa).

The protein belongs to the carbon-nitrogen hydrolase superfamily. NIT1/NIT2 family.

Its function is as follows. Pseudogene resulting from a nucleotide deletion that introduces a premature stop codon at position 66. This is the C-terminal fragment. The intact protein (AC A0A140NCB4) hydrolyzes deaminated glutathione (dGSH, 2-oxoglutaramate) to alpha-ketoglutarate (alpha-KG) and cysteinylglycine, has less activity against alpha-ketoglutaramate (a-KGM) and no activity on glutathione or L-glutamine. May function as a metabolite repair enzyme. The chain is Putative protein YbeM (ybeM) from Escherichia coli (strain K12).